We begin with the raw amino-acid sequence, 243 residues long: ADP-ribosylation factor-like protein 10 (243 aa).

GTP-binding positions include 83-90 (GLDGSGKS), 127-131 (EIGGS), and 184-187 (NKQD).

Belongs to the small GTPase superfamily. Arf family.

In Mus musculus (Mouse), this protein is ADP-ribosylation factor-like protein 10 (Arl10).